The chain runs to 203 residues: MSDEIEDRPRTRSRTPSVDTQSYTINEEAHHIITDSDSSSSENEDGEGNETNSSDDSSESGSVERFLDEIVPTTSTSFIPNDTPDPATLFDITEYIFDSIVQSTNACDFSEAFALQAKTSAVINSKSMELKNLIEQTKVRLPELQAKFKNGTQTLRTIRKNLDNAKSRIQVMNDVLQTDYPIEFNQARDKILERTLDSDEEVI.

The tract at residues 1–62 (MSDEIEDRPR…SSDDSSESGS (62 aa)) is disordered. Residues 14–25 (RTPSVDTQSYTI) show a composition bias toward polar residues. Low complexity predominate over residues 49 to 61 (NETNSSDDSSESG). Residues 126 to 178 (KSMELKNLIEQTKVRLPELQAKFKNGTQTLRTIRKNLDNAKSRIQVMNDVLQT) adopt a coiled-coil conformation.

The protein belongs to the KXD1 family. As to quaternary structure, component of the biogenesis of lysosome-related organelles complex-1 (BLOC-1).

It localises to the endosome. Component of the biogenesis of lysosome-related organelles complex-1 (BLOC-1) involved in endosomal cargo sorting. The chain is Biogenesis of lysosome-related organelles complex 1 subunit KXD1 (KXD1) from Candida glabrata (strain ATCC 2001 / BCRC 20586 / JCM 3761 / NBRC 0622 / NRRL Y-65 / CBS 138) (Yeast).